The sequence spans 350 residues: 5'-tyrosyl-DNA phosphodiesterase (350 aa).

The tract at residues 113 to 117 (NIDGL) is interaction with 5' end of substrate DNA. 2 residues coordinate Mg(2+): aspartate 115 and glutamate 145. Residues 219–224 (HLESMR) form an interaction with 5' end of substrate DNA region. The Proton donor/acceptor role is filled by aspartate 258. Positions 260 to 262 (NLR) are interaction with 5' end of substrate DNA.

Belongs to the CCR4/nocturin family. TTRAP/TDP2 subfamily. Mg(2+) serves as cofactor. Requires Mn(2+) as cofactor.

The protein resides in the nucleus. It localises to the PML body. Its function is as follows. DNA repair enzyme that can remove a variety of covalent adducts from DNA through hydrolysis of a 5'-phosphodiester bond, giving rise to DNA with a free 5' phosphate. Catalyzes the hydrolysis of dead-end complexes between DNA and the topoisomerase 2 (top2) active site tyrosine residue. Hydrolyzes 5'-phosphoglycolates on protruding 5' ends on DNA double-strand breaks (DSBs) due to DNA damage by radiation and free radicals. This Caenorhabditis briggsae protein is 5'-tyrosyl-DNA phosphodiesterase.